The primary structure comprises 329 residues: 7,8-didemethyl-8-hydroxy-5-deazariboflavin synthase (329 aa).

The Radical SAM core domain maps to 6–244 (ITYTKNVFLP…EEISIQVAPN (239 aa)). Positions 20, 24, and 27 each coordinate [4Fe-4S] cluster.

The protein belongs to the radical SAM superfamily. CofG family. Consists of two subunits, CofG and CofH. The cofactor is [4Fe-4S] cluster.

The enzyme catalyses 5-amino-5-(4-hydroxybenzyl)-6-(D-ribitylimino)-5,6-dihydrouracil + S-adenosyl-L-methionine = 7,8-didemethyl-8-hydroxy-5-deazariboflavin + 5'-deoxyadenosine + L-methionine + NH4(+) + H(+). Its pathway is cofactor biosynthesis; coenzyme F0 biosynthesis. Catalyzes the radical-mediated synthesis of 7,8-didemethyl-8-hydroxy-5-deazariboflavin from 5-amino-5-(4-hydroxybenzyl)-6-(D-ribitylimino)-5,6-dihydrouracil. The chain is 7,8-didemethyl-8-hydroxy-5-deazariboflavin synthase from Methanoregula boonei (strain DSM 21154 / JCM 14090 / 6A8).